The sequence spans 107 residues: Heme-degrading monooxygenase (107 aa).

The region spanning 2-93 is the ABM domain; sequence VIVANKTLIR…DYILGNEIEF (92 aa). Asparagine 6 is a Fe cation binding site. Histidine 76 lines the heme pocket.

The protein belongs to the antibiotic biosynthesis monooxygenase family. Heme-degrading monooxygenase IsdG subfamily. As to quaternary structure, homodimer.

Its subcellular location is the cytoplasm. It carries out the reaction heme b + 3 reduced [NADPH--hemoprotein reductase] + 3 O2 = biliverdin IXalpha + CO + Fe(2+) + 3 oxidized [NADPH--hemoprotein reductase] + 3 H2O + H(+). In terms of biological role, allows bacterial pathogens to use the host heme as an iron source. Catalyzes the oxidative degradation of the heme macrocyclic porphyrin ring to the biliverdin in the presence of a suitable electron donor such as ascorbate or NADPH--cytochrome P450 reductase, with subsequent release of free iron. This is Heme-degrading monooxygenase from Shouchella clausii (strain KSM-K16) (Alkalihalobacillus clausii).